A 393-amino-acid polypeptide reads, in one-letter code: Na(+)/H(+) antiporter NhaA (393 aa).

11 consecutive transmembrane segments (helical) span residues 24–44 (GGLV…SPLA), 58–78 (LSLL…LVGL), 96–116 (ILPG…YILF), 126–146 (GWAI…SLFG), 155–175 (IFLA…IALF), 178–198 (SDLN…LYGM), 214–234 (AVLW…GVLL), 267–287 (VAFI…FSGV), 300–320 (VAAG…FLLV), 338–358 (GVAA…LLAF), and 369–389 (MGIL…LATF).

It belongs to the NhaA Na(+)/H(+) (TC 2.A.33) antiporter family.

The protein resides in the cell inner membrane. It catalyses the reaction Na(+)(in) + 2 H(+)(out) = Na(+)(out) + 2 H(+)(in). In terms of biological role, na(+)/H(+) antiporter that extrudes sodium in exchange for external protons. The sequence is that of Na(+)/H(+) antiporter NhaA from Rhizobium etli (strain ATCC 51251 / DSM 11541 / JCM 21823 / NBRC 15573 / CFN 42).